The sequence spans 272 residues: Protein FAM210A (272 aa).

One can recognise a DUF1279 domain in the interval 117 to 229 (DKSISLYQRF…GYMSTPPPVK (113 aa)). A helical membrane pass occupies residues 136 to 156 (VLIPVHLITSGVWFGTFYYAA). The stretch at 229–271 (KEYLQDRMEETKELITEKMEETKDRLTEKLQETKEKVSFKKKV) forms a coiled coil. Residues 246–272 (KMEETKDRLTEKLQETKEKVSFKKKVE) are disordered.

The protein belongs to the FAM210 family. In terms of assembly, interacts with ATAD3A.

It localises to the membrane. The protein resides in the mitochondrion. Its subcellular location is the cytoplasm. May play a role in the structure and strength of both muscle and bone. The chain is Protein FAM210A (FAM210A) from Homo sapiens (Human).